The sequence spans 210 residues: Na(+)-translocating NADH-quinone reductase subunit D (210 aa).

5 consecutive transmembrane segments (helical) span residues 42 to 62, 72 to 92, 103 to 123, 131 to 151, and 178 to 198; these read FVMT…ISLI, IIAQ…VLKA, VFVG…AYAM, FLDG…VATV, and NGLL…IWGV.

The protein belongs to the NqrDE/RnfAE family. Composed of six subunits; NqrA, NqrB, NqrC, NqrD, NqrE and NqrF.

It is found in the cell inner membrane. It catalyses the reaction a ubiquinone + n Na(+)(in) + NADH + H(+) = a ubiquinol + n Na(+)(out) + NAD(+). NQR complex catalyzes the reduction of ubiquinone-1 to ubiquinol by two successive reactions, coupled with the transport of Na(+) ions from the cytoplasm to the periplasm. NqrA to NqrE are probably involved in the second step, the conversion of ubisemiquinone to ubiquinol. The protein is Na(+)-translocating NADH-quinone reductase subunit D of Aeromonas salmonicida (strain A449).